We begin with the raw amino-acid sequence, 338 residues long: MTNSVFQGRSFLAEKDFTRAELEYLIGLSAHLKDLKKRNIEHRYLAGKNIALLFEKTSTRTRAAFTTAAIDLGAHPEYLGANDIQLGKKESTEDTAKVLGRMFDGIEFRGFSQRMVEELAEFSGVPVWNGLTDEWHPTQMLADYLTVQENFGRLEGLTLVYCGDGRNNVANSLLVTGAILGVNVHIFSPKELFPEQEIVELAEGFAKESGAHILITEDADEAVKGADVLYTDVWVSMGEEDKFAERVALLKPYQVNMDLVKKADNEDLIFLHCLPAFHDTNTVYGKDVAEKFGVEEMEVTDEVFRSKYARHFDQAENRMHTIKAVMAATLGNLYIPKV.

Carbamoyl phosphate contacts are provided by residues 58–61 (STRT), Q85, R109, and 136–139 (HPTQ). Residues N168, D232, and 236 to 237 (SM) each bind L-ornithine. Carbamoyl phosphate contacts are provided by residues 273 to 274 (CL) and R318.

This sequence belongs to the aspartate/ornithine carbamoyltransferase superfamily. OTCase family.

The protein localises to the cytoplasm. The catalysed reaction is carbamoyl phosphate + L-ornithine = L-citrulline + phosphate + H(+). It functions in the pathway amino-acid degradation; L-arginine degradation via ADI pathway; carbamoyl phosphate from L-arginine: step 2/2. In terms of biological role, reversibly catalyzes the transfer of the carbamoyl group from carbamoyl phosphate (CP) to the N(epsilon) atom of ornithine (ORN) to produce L-citrulline. The protein is Ornithine carbamoyltransferase, catabolic of Streptococcus gordonii (strain Challis / ATCC 35105 / BCRC 15272 / CH1 / DL1 / V288).